Here is a 232-residue protein sequence, read N- to C-terminus: Ubiquinone biosynthesis O-methyltransferase (232 aa).

4 residues coordinate S-adenosyl-L-methionine: R36, G55, D76, and L120.

It belongs to the methyltransferase superfamily. UbiG/COQ3 family.

The enzyme catalyses a 3-demethylubiquinol + S-adenosyl-L-methionine = a ubiquinol + S-adenosyl-L-homocysteine + H(+). It catalyses the reaction a 3-(all-trans-polyprenyl)benzene-1,2-diol + S-adenosyl-L-methionine = a 2-methoxy-6-(all-trans-polyprenyl)phenol + S-adenosyl-L-homocysteine + H(+). It functions in the pathway cofactor biosynthesis; ubiquinone biosynthesis. Its function is as follows. O-methyltransferase that catalyzes the 2 O-methylation steps in the ubiquinone biosynthetic pathway. This chain is Ubiquinone biosynthesis O-methyltransferase, found in Azotobacter vinelandii (strain DJ / ATCC BAA-1303).